Reading from the N-terminus, the 173-residue chain is dCTP deaminase, dUMP-forming (173 aa).

DCTP contacts are provided by residues 93–98, D111, 119–121, Q138, and Y151; these read RSSIGR and TLE. E121 serves as the catalytic Proton donor/acceptor.

Belongs to the dCTP deaminase family. Homotrimer.

The catalysed reaction is dCTP + 2 H2O = dUMP + NH4(+) + diphosphate. The protein operates within pyrimidine metabolism; dUMP biosynthesis; dUMP from dCTP: step 1/1. In terms of biological role, bifunctional enzyme that catalyzes both the deamination of dCTP to dUTP and the hydrolysis of dUTP to dUMP without releasing the toxic dUTP intermediate. The protein is dCTP deaminase, dUMP-forming of Cytophaga hutchinsonii (strain ATCC 33406 / DSM 1761 / CIP 103989 / NBRC 15051 / NCIMB 9469 / D465).